Consider the following 661-residue polypeptide: MATKFPKFSQDLAQDPTTRRIWYGIATAHDFEMHDGMTEENLYQKIFASHFGHLAIIFLWTSGNLFHVAWQGNFAQWVADPLNTRPIAHAIWDPHFGEAAIEAFTQSDASCAVNIAYSGVYHWWYTIGMRTAADLYQGSIFLMVLAALMLFAGWLHLQPKFRPSLAWFKNAESRLNHHLAGLFGVSSLAWAGHLIHVAIPASRGETVNWGNFMSTPPHPAGLAPFFSGNWSVYAANPDTTGHVFNTSEGAGTAILTFLGGFHPQTQAMWLTDIAHHHLAIAVIFIIAGHMYKTNFGIGHSMKEILKTHRSPEGTPFGGMLGAGHDGLYDTINNSLHFQLGLALAALGVVTSLVAQHMYSMPSYAFIAQDFTTQAALYVHHQYIAIFLMCGAFAHGAIFFVRDYDHEANKNNVLGRVLEHKEAIISHLSWVSLFLGFHTLALVHNDVVVAFATPEKQILLEPVFAQFVQAASGKALYGFNVLLVNPDSAASIASDYIAGPHFWLDAINSGVNSLFLTIGPGDFLVHHAIALGLHTTTLILVKGALDARGSKLMPDKKDFGYSFPCDGPGRGGTCDISAWDSFYLAVFWALNTAGWLTFYWHWKHLSIWQDNVAQFNESSTYLMGWFRDYLWLNSAQLINGYNPFGSQQLAVWAWMFLFGHLV.

8 helical membrane-spanning segments follow: residues 46-69 (IFASHFGHLAIIFLWTSGNLFHVA), 135-158 (LYQGSIFLMVLAALMLFAGWLHLQ), 175-199 (LNHHLAGLFGVSSLAWAGHLIHVAI), 273-291 (IAHHHLAIAVIFIIAGHMY), 335-358 (LHFQLGLALAALGVVTSLVAQHMY), 374-400 (AALYVHHQYIAIFLMCGAFAHGAIFFV), 422-443 (AIISHLSWVSLFLGFHTLALVH), and 522-540 (FLVHHAIALGLHTTTLILV). Residues Cys-564 and Cys-573 each contribute to the [4Fe-4S] cluster site. Helical transmembrane passes span 580-601 (SFYLAVFWALNTAGWLTFYWHW) and 648-661 (LAVWAWMFLFGHLV). His-659 lines the chlorophyll a pocket.

This sequence belongs to the PsaA/PsaB family. As to quaternary structure, the PsaA/B heterodimer binds the P700 chlorophyll special pair and subsequent electron acceptors. PSI consists of a core antenna complex that captures photons, and an electron transfer chain that converts photonic excitation into a charge separation. The cyanobacterial PSI reaction center is composed of one copy each of PsaA,B,C,D,E,F,I,J,K,L,M and X, and forms trimeric complexes. PSI electron transfer chain: 5 chlorophyll a, 1 chlorophyll a', 2 phylloquinones and 3 4Fe-4S clusters. PSI core antenna: 90 chlorophyll a, 22 carotenoids, 3 phospholipids and 1 galactolipid. P700 is a chlorophyll a/chlorophyll a' dimer, A0 is one or more chlorophyll a, A1 is one or both phylloquinones and FX is a shared 4Fe-4S iron-sulfur center. is required as a cofactor.

It localises to the cellular thylakoid membrane. It carries out the reaction reduced [plastocyanin] + hnu + oxidized [2Fe-2S]-[ferredoxin] = oxidized [plastocyanin] + reduced [2Fe-2S]-[ferredoxin]. Functionally, psaA and PsaB bind P700, the primary electron donor of photosystem I (PSI), as well as the electron acceptors A0, A1 and FX. PSI is a plastocyanin/cytochrome c6-ferredoxin oxidoreductase, converting photonic excitation into a charge separation, which transfers an electron from the donor P700 chlorophyll pair to the spectroscopically characterized acceptors A0, A1, FX, FA and FB in turn. Oxidized P700 is reduced on the lumenal side of the thylakoid membrane by plastocyanin or cytochrome c6. The sequence is that of Photosystem I P700 chlorophyll a apoprotein A2 (psaB) from Prochlorothrix hollandica.